Consider the following 1241-residue polypeptide: ATP-dependent helicase/nuclease subunit A (1241 aa).

The UvrD-like helicase ATP-binding domain occupies 12–485 (SQWTDDQWKA…IDLAKNFRSR (474 aa)). 33-40 (AAAGSGKT) is a binding site for ATP. The region spanning 505–805 (GEIDYDADAE…RIMTIHKSKG (301 aa)) is the UvrD-like helicase C-terminal domain.

It belongs to the helicase family. AddA subfamily. In terms of assembly, heterodimer of AddA and AddB/RexB. The cofactor is Mg(2+).

The enzyme catalyses Couples ATP hydrolysis with the unwinding of duplex DNA by translocating in the 3'-5' direction.. It carries out the reaction ATP + H2O = ADP + phosphate + H(+). Functionally, the heterodimer acts as both an ATP-dependent DNA helicase and an ATP-dependent, dual-direction single-stranded exonuclease. Recognizes the chi site generating a DNA molecule suitable for the initiation of homologous recombination. The AddA nuclease domain is required for chi fragment generation; this subunit has the helicase and 3' -&gt; 5' nuclease activities. The polypeptide is ATP-dependent helicase/nuclease subunit A (Bacillus thuringiensis (strain Al Hakam)).